The chain runs to 297 residues: HTH-type transcriptional regulator ArgP (297 aa).

The 57-residue stretch at 2–58 (FDYKLLSALAAVVEQAGFERAAQVLGLSQSAISQRIKLLEARVGQPVLVRGTPPSPT) folds into the HTH lysR-type domain. Residues 19–38 (FERAAQVLGLSQSAISQRIK) constitute a DNA-binding region (H-T-H motif).

Belongs to the LysR transcriptional regulatory family. Homodimer.

Its function is as follows. Controls the transcription of genes involved in arginine and lysine metabolism. This chain is HTH-type transcriptional regulator ArgP, found in Pseudomonas fluorescens (strain Pf0-1).